Reading from the N-terminus, the 192-residue chain is Peptidyl-tRNA hydrolase (192 aa).

TRNA is bound at residue Tyr17. His22 serves as the catalytic Proton acceptor. TRNA is bound by residues Phe68, Asn70, and Asn116.

This sequence belongs to the PTH family. Monomer.

Its subcellular location is the cytoplasm. It catalyses the reaction an N-acyl-L-alpha-aminoacyl-tRNA + H2O = an N-acyl-L-amino acid + a tRNA + H(+). Hydrolyzes ribosome-free peptidyl-tRNAs (with 1 or more amino acids incorporated), which drop off the ribosome during protein synthesis, or as a result of ribosome stalling. Functionally, catalyzes the release of premature peptidyl moieties from peptidyl-tRNA molecules trapped in stalled 50S ribosomal subunits, and thus maintains levels of free tRNAs and 50S ribosomes. This is Peptidyl-tRNA hydrolase from Xylella fastidiosa (strain Temecula1 / ATCC 700964).